A 972-amino-acid chain; its full sequence is MPNASPASPLNAPLAELEQRDAFIGRHVGPNATEIATMLAAVGAPDLDTLIDQTVPPAIRLAAPLPLEGPKPEHEALADLRAIAAKNVIRKSLIGMGYYGTHTPAVILRNVMENPGWYTAYTPYQAEIAQGRLEALLNYQQMVIDLTGLELANASLLDEATAAAEAMTMARRVAKSKSNVFYVDEACFPQTIDVLRTRAGLFGFELKFGPAHDAANADAFGALLQYPNERGEIIDLSGTVAALKAKGAVVAIASDLMALVLLKSPGTMGADIALGSAQRFGVPMGFGGPHAAFFATREANVRAMPGRIIGVSKDARGKTALRMTLQTREQHIRREKANSNICTSQVLLANMSGFYAVYHGPQGLRTIAARIHRLAAILAQGLRDAGFNVPAGAFFDTLQVDTGARTAELLAACDAAGFNLRPVSDTVLGLSVDETTTGDDVATLLRLFGASGELAALDAKVGAAGGAIPAALLRDDAILTHPVFNTHHTEHEMLRYLKKLQNRDLALDHSMISLGSCTMKLNATSEMIPITWAEFANLHPFAPREQVRGYLEMIDGLAGYLKAVTGFAAISMQPNSGAQGEYAGLVAIRRYHDSRGDTHRRVCLIPKSAHGTNPASAQMCGMDVVVVACDERGNVDLADLEAKVAQHADRLAALMITYPSTHGVFEESIREICASVHRHGGQVYMDGANLNAQVGLTSPATIGADVSHMNLHKTFCIPHGGGGPGMGPIGLAAHLAPFMADHVVAATGDETRPNKGQGAVSAAPFGSASILPISWMYIAMMGDTGLKLATEVAILNANYVANRLAEHYPVLYTGSQGRVAHECILDIRPIKANTGISEVDIAKRLMDYGFHAPTMSFPVAGTIMIEPTESEDLGELDRFIAAMITIRNEIREVENGAWPTDDNPLKNAPHTQADFIAADGAQWSRPYSREQAVFPLPWVAENKFWPSVNRIDDVYGDRNLFCACVPIEDYAS.

N6-(pyridoxal phosphate)lysine is present on K713.

The protein belongs to the GcvP family. In terms of assembly, the glycine cleavage system is composed of four proteins: P, T, L and H. Requires pyridoxal 5'-phosphate as cofactor.

It carries out the reaction N(6)-[(R)-lipoyl]-L-lysyl-[glycine-cleavage complex H protein] + glycine + H(+) = N(6)-[(R)-S(8)-aminomethyldihydrolipoyl]-L-lysyl-[glycine-cleavage complex H protein] + CO2. In terms of biological role, the glycine cleavage system catalyzes the degradation of glycine. The P protein binds the alpha-amino group of glycine through its pyridoxal phosphate cofactor; CO(2) is released and the remaining methylamine moiety is then transferred to the lipoamide cofactor of the H protein. In Aromatoleum aromaticum (strain DSM 19018 / LMG 30748 / EbN1) (Azoarcus sp. (strain EbN1)), this protein is Glycine dehydrogenase (decarboxylating).